The sequence spans 127 residues: Snaclec bothroinsularin subunit beta (127 aa).

3 disulfide bridges follow: C2–C13, C30–C123, and C100–C115. The C-type lectin domain maps to 9-124 (YEGSCYRVFE…CTKLEYFVCE (116 aa)).

It belongs to the snaclec family. In terms of assembly, heterodimer of subunits alpha and beta; disulfide-linked. Expressed by the venom gland.

Its subcellular location is the secreted. Thrombin and prothrombin (F2) inhibitor. The IC(50) of thrombin-induced platelet aggregation and fibrinocoagulation is 62 and 35 nM, respectively. Its inhibitory activity is at least 10-fold lower than that observed for other thrombin inhibitors. In Bothrops insularis (Golden lancehead), this protein is Snaclec bothroinsularin subunit beta.